Reading from the N-terminus, the 854-residue chain is Glucans biosynthesis glucosyltransferase H (854 aa).

The next 7 helical transmembrane spans lie at 155–175 (ILLV…KTIL), 209–229 (ILVL…TALM), 528–548 (VFLT…FLML), 583–603 (IALF…SVIL), 619–639 (FISL…RMLF), 671–691 (FVRH…MAWL), and 695–715 (FLWW…VSVY).

It belongs to the glycosyltransferase 2 family. OpgH subfamily.

The protein localises to the cell inner membrane. It functions in the pathway glycan metabolism; osmoregulated periplasmic glucan (OPG) biosynthesis. Involved in the biosynthesis of osmoregulated periplasmic glucans (OPGs). This is Glucans biosynthesis glucosyltransferase H from Pectobacterium carotovorum subsp. carotovorum (strain PC1).